Here is a 345-residue protein sequence, read N- to C-terminus: Anthranilate phosphoribosyltransferase (345 aa).

Residues glycine 80, 83–84 (GD), threonine 88, 90–93 (NIST), 108–116 (KHGNRSVSS), and serine 120 contribute to the 5-phospho-alpha-D-ribose 1-diphosphate site. Glycine 80 contacts anthranilate. Serine 92 is a Mg(2+) binding site. Asparagine 111 contributes to the anthranilate binding site. Position 166 (arginine 166) interacts with anthranilate. Mg(2+) contacts are provided by aspartate 225 and glutamate 226.

It belongs to the anthranilate phosphoribosyltransferase family. As to quaternary structure, homodimer. Requires Mg(2+) as cofactor.

The enzyme catalyses N-(5-phospho-beta-D-ribosyl)anthranilate + diphosphate = 5-phospho-alpha-D-ribose 1-diphosphate + anthranilate. Its pathway is amino-acid biosynthesis; L-tryptophan biosynthesis; L-tryptophan from chorismate: step 2/5. Its function is as follows. Catalyzes the transfer of the phosphoribosyl group of 5-phosphorylribose-1-pyrophosphate (PRPP) to anthranilate to yield N-(5'-phosphoribosyl)-anthranilate (PRA). This is Anthranilate phosphoribosyltransferase from Acetivibrio thermocellus (strain ATCC 27405 / DSM 1237 / JCM 9322 / NBRC 103400 / NCIMB 10682 / NRRL B-4536 / VPI 7372) (Clostridium thermocellum).